The primary structure comprises 533 residues: Solute carrier family 2, facilitated glucose transporter member 2 (533 aa).

At 1-17 the chain is on the cytoplasmic side; it reads MDGKSKMQAEKHLTGTL. A helical transmembrane segment spans residues 18–38; that stretch reads VLSVFTAVLGFFQYGYSLGVI. Residues 39 to 110 are Extracellular-facing; the sequence is NAPQKVIEAH…SPHILTMYWS (72 aa). N-linked (GlcNAc...) asparagine glycosylation is found at Asn64 and Asn69. The helical transmembrane segment at 111–131 threads the bilayer; sequence LSVSMFAVGGMVSSFTVGWIG. Residues 132–136 lie on the Cytoplasmic side of the membrane; that stretch reads DRLGR. The helical transmembrane segment at 137-157 threads the bilayer; it reads VKAMLVVNVLSIAGNLLMGLA. At 158–163 the chain is on the extracellular side; it reads KMGPSH. A helical membrane pass occupies residues 164 to 184; the sequence is ILIIAGRAITGLYCGLSSGLV. Topologically, residues 185–199 are cytoplasmic; it reads PMYVSEVSPTALRGA. Residues 200 to 220 traverse the membrane as a helical segment; the sequence is LGTLHQLAIVTGILISQVLGL. A D-glucose-binding site is contributed by Gln205. The Extracellular segment spans residues 221–229; it reads DFLLGNDEL. A helical membrane pass occupies residues 230–250; sequence WPLLLGLSGVAALLQFFLLLL. The Cytoplasmic portion of the chain corresponds to 251 to 315; sequence CPESPRYLYI…LFSSSKYRQA (65 aa). Residues 316-336 form a helical membrane-spanning segment; it reads VIVALMVQISQQFSGINAIFY. D-glucose contacts are provided by residues 326–327 and Asn332; that span reads QQ. The Extracellular portion of the chain corresponds to 337 to 350; the sequence is YSTNIFQRAGVGQP. A helical membrane pass occupies residues 351 to 371; that stretch reads VYATIGVGVVNTVFTVISVFL. A D-glucose-binding site is contributed by Asn361. The Cytoplasmic segment spans residues 372-379; that stretch reads VEKAGRRS. Residues 380-400 traverse the membrane as a helical segment; it reads LFLAGLMGMLISAVAMTVGLV. Over 401–413 the chain is Extracellular; sequence LLSQFAWMSYVSM. Residues 414–434 form a helical membrane-spanning segment; it reads VAIFLFVIFFEVGPGPIPWFI. D-glucose-binding residues include Glu424 and Trp432. Topologically, residues 435–445 are cytoplasmic; sequence VAELFSQGPRP. Residues 446 to 466 form a helical membrane-spanning segment; that stretch reads AAIAVAGFCNWACNFIVGMCF. The Extracellular segment spans residues 467-471; that stretch reads QYIAD. A helical transmembrane segment spans residues 472–492; it reads LCGPYVFVVFAVLLLVFFLFA. Residues 493–533 lie on the Cytoplasmic side of the membrane; the sequence is YLKVPETKGKSFEEIAAAFRRKKLPAKSMTELEDLRGGEEA.

This sequence belongs to the major facilitator superfamily. Sugar transporter (TC 2.A.1.1) family. Glucose transporter subfamily.

The protein localises to the cell membrane. The catalysed reaction is D-glucose(out) = D-glucose(in). It carries out the reaction D-fructose(out) = D-fructose(in). The enzyme catalyses L-dehydroascorbate(out) = L-dehydroascorbate(in). It catalyses the reaction D-galactose(in) = D-galactose(out). With respect to regulation, D-glucose and maltose competitively inhibit fructose transport. D-glucose, D-fructose and maltose inhibit deoxyglucose transport. Functionally, facilitative hexose transporter that mediates the transport of glucose, fructose and galactose. Likely mediates the bidirectional transfer of glucose across the plasma membrane of hepatocytes and is responsible for uptake of glucose by the beta cells. This is Solute carrier family 2, facilitated glucose transporter member 2 from Gallus gallus (Chicken).